The following is a 214-amino-acid chain: Reticulon-3-A (214 aa).

Residues Met1 to Gly21 are disordered. Residues Val26–Glu214 form the Reticulon domain. 2 consecutive transmembrane segments (helical) span residues Met46–Leu66 and Val155–Val175.

In terms of assembly, homodimer. As to expression, expressed in the animal hemisphere at the four-cell stage. During gastrulation, expression becomes restricted to the prospective neuroectoderm. At the early tail bud stage, expressed in the head structure. At the tadpole stage, expressed in head and neural tissues including the otic vesicle and optic nerve.

The protein localises to the endoplasmic reticulum membrane. The protein resides in the golgi apparatus membrane. In terms of biological role, may be involved in membrane trafficking in the early secretory pathway. The sequence is that of Reticulon-3-A (rtn3-a) from Xenopus laevis (African clawed frog).